Here is a 189-residue protein sequence, read N- to C-terminus: Photosystem I assembly protein Ycf4 (189 aa).

The next 2 membrane-spanning stretches (helical) occupy residues 31–51 (TVIL…YFGF) and 70–90 (VMSF…LTII).

It belongs to the Ycf4 family.

It localises to the plastid. Its subcellular location is the chloroplast thylakoid membrane. In terms of biological role, seems to be required for the assembly of the photosystem I complex. This is Photosystem I assembly protein Ycf4 from Chlorokybus atmophyticus (Soil alga).